The chain runs to 66 residues: Alpha-conotoxin GIB (66 aa).

Positions 1-21 are cleaved as a signal peptide; that stretch reads MGMRMMFTVFLLVVLATTVVS. Residues 22–49 constitute a propeptide that is removed on maturation; sequence FPSERASDGRDDTAKDEGSDMEKLVEKK. 2 disulfide bridges follow: Cys-51–Cys-56 and Cys-52–Cys-62. Gly-64 carries the post-translational modification Glycine amide.

The protein belongs to the conotoxin A superfamily. Expressed by the venom duct.

It is found in the secreted. Alpha-conotoxins act on postsynaptic membranes, they bind to the nicotinic acetylcholine receptors (nAChR) and thus inhibit them. Both the globular (with C1-C3; C2-C4 disulfide pattern) and ribbon (C1-C4; C2-C3) isomers reversibly inhibit human muscle-type alpha-1-beta-1-delta-epsilon/CHRNA1-CHRNB1-CHRND-CHRNE nAChRs (IC(50)=116 nM and IC(50)=643 nM, respectively). Both isomers also inhibit alpha-7/CHRNA7 and alpha-9-alpha-10/CHRNA9-CHRNA10 (IC(50)=1113 nM by globular isomer) nAChRs. This Conus geographus (Geography cone) protein is Alpha-conotoxin GIB.